A 526-amino-acid polypeptide reads, in one-letter code: MTKLSLLPLLTLASAVLAKQDAFQAKCASFGRKIKLPNVHVNFVEYVPGGTNLTLPDNDVTCGASSQVVSADMCRVAMAVDTSKSSQITLEAWFPREYTGRFLSTGNGGLSGCIQYYDLAYTAGLGFATVGANNGHNGTSGKPFYQHPEVIEDFAYRSIHTGVVVGKQLTKMFYKEGFDKSYYLGCSTGGRQGFKSIQKYPNDFDGVVAGAPAFNFVNLISWSIHFYSITGSNTSDTYLSPESWKVVHDEIVRQCDEIDGAKDGIIEDTDLCQPVIETIICKPGASDKTNCITGAQAKTVRNVLSPFYGVNGTLLYPRMQPGSELFASSVVYNGQPFRYSTDWYRYVVYNNPDWDATKWTVEDAAVALAQNPYNIQTWDADISSFQKAGGKVLTYHGMQDQLISSDNSKLYYARVAEEMGLGPEELDDFYRFFPVSGMAHCTGGDGAYGIGNGLRTYNGAEPENNVLMAMVQWVEKGIAPEFIRGAKFSNGVGSSVEYTRKHCRYPRRNVYKGPGNYSDENAWECV.

Positions 1-18 are cleaved as a signal peptide; the sequence is MTKLSLLPLLTLASAVLA. 2 disulfides stabilise this stretch: Cys27–Cys74 and Cys62–Cys113. An N-linked (GlcNAc...) asparagine glycan is attached at Asn52. N-linked (GlcNAc...) asparagine glycosylation occurs at Asn137. Disulfide bonds link Cys186-Cys441, Cys255-Cys272, Cys281-Cys291, and Cys503-Cys525. The active-site Acyl-ester intermediate is the Ser187. Residue Asn233 is glycosylated (N-linked (GlcNAc...) asparagine). The Ca(2+) site is built by Asp256, Asp259, Ala261, Asp263, and Ile265. N-linked (GlcNAc...) asparagine glycosylation occurs at Asn311. Catalysis depends on charge relay system residues Asp400 and His440. N-linked (GlcNAc...) asparagine glycosylation is present at Asn516.

It belongs to the tannase family.

The protein localises to the secreted. It catalyses the reaction feruloyl-polysaccharide + H2O = ferulate + polysaccharide.. In terms of biological role, involved in degradation of plant cell walls. Hydrolyzes the feruloyl-arabinose ester bond in arabinoxylans as well as the feruloyl-galactose and feruloyl-arabinose ester bonds in pectin. The polypeptide is Probable feruloyl esterase B-2 (faeB-2) (Aspergillus fumigatus (strain CBS 144.89 / FGSC A1163 / CEA10) (Neosartorya fumigata)).